Reading from the N-terminus, the 315-residue chain is tRNA pseudouridine synthase B (315 aa).

The active-site Nucleophile is the Asp-47.

Belongs to the pseudouridine synthase TruB family. Type 1 subfamily.

The catalysed reaction is uridine(55) in tRNA = pseudouridine(55) in tRNA. Functionally, responsible for synthesis of pseudouridine from uracil-55 in the psi GC loop of transfer RNAs. The protein is tRNA pseudouridine synthase B of Shewanella pealeana (strain ATCC 700345 / ANG-SQ1).